The following is an 819-amino-acid chain: DNA topoisomerase 4 subunit A (819 aa).

Residues 30-496 (LPDIRDGLKP…QIIEIDTASL (467 aa)) form the Topo IIA-type catalytic domain. Residue Tyr118 is the O-(5'-phospho-DNA)-tyrosine intermediate of the active site.

This sequence belongs to the type II topoisomerase GyrA/ParC subunit family. ParC type 2 subfamily. In terms of assembly, heterotetramer composed of ParC and ParE.

The protein resides in the cell membrane. It catalyses the reaction ATP-dependent breakage, passage and rejoining of double-stranded DNA.. Functionally, topoisomerase IV is essential for chromosome segregation. It relaxes supercoiled DNA. Performs the decatenation events required during the replication of a circular DNA molecule. The protein is DNA topoisomerase 4 subunit A of Streptococcus pyogenes serotype M3 (strain SSI-1).